The following is a 98-amino-acid chain: NADH-ubiquinone oxidoreductase chain 4L (98 aa).

The next 3 helical transmembrane spans lie at 1-21 (MAPI…GVLI), 28-48 (STLL…TLLI), and 59-79 (APLI…ALLV).

It belongs to the complex I subunit 4L family. Core subunit of respiratory chain NADH dehydrogenase (Complex I) which is composed of 45 different subunits.

The protein localises to the mitochondrion inner membrane. It carries out the reaction a ubiquinone + NADH + 5 H(+)(in) = a ubiquinol + NAD(+) + 4 H(+)(out). Its function is as follows. Core subunit of the mitochondrial membrane respiratory chain NADH dehydrogenase (Complex I) which catalyzes electron transfer from NADH through the respiratory chain, using ubiquinone as an electron acceptor. Part of the enzyme membrane arm which is embedded in the lipid bilayer and involved in proton translocation. In Perameles gunnii (Eastern barred bandicoot), this protein is NADH-ubiquinone oxidoreductase chain 4L (MT-ND4L).